The sequence spans 314 residues: Melanoma-associated antigen 3 (314 aa).

Residues 1 to 20 are compositionally biased toward basic and acidic residues; that stretch reads MPLEQRSQHCKPEEGLEARG. Residues 1–99 are disordered; it reads MPLEQRSQHC…QEEEGPSTFP (99 aa). The span at 21 to 44 shows a compositional bias: low complexity; the sequence is EALGLVGAQAPATEEQEAASSSST. Positions 65–87 are enriched in polar residues; the sequence is PQGASSLPTTMNYPLWSQSYEDS. Residues 109–308 enclose the MAGE domain; it reads LSRKVAELVH…ISYPPLHEWV (200 aa).

As to quaternary structure, interacts with TRIM28. Post-translationally, ubiquitinated by the DCX(DCAF12) complex specifically recognizes the diglutamate (Glu-Glu) at the C-terminus, leading to its degradation. As to expression, expressed in many tumors of several types, such as melanoma, head and neck squamous cell carcinoma, lung carcinoma and breast carcinoma, but not in normal tissues except for testes and placenta. Never expressed in kidney tumors, Leukemias and lymphomas.

Its function is as follows. Activator of ubiquitin ligase activity of RING-type zinc finger-containing E3 ubiquitin-protein ligases that acts as a repressor of autophagy. May enhance ubiquitin ligase activity of TRIM28 and stimulate p53/TP53 ubiquitination by TRIM28. Proposed to act through recruitment and/or stabilization of the Ubl-conjugating enzyme (E2) at the E3:substrate complex. May play a role in embryonal development and tumor transformation or aspects of tumor progression. In vitro promotes cell viability in melanoma cell lines. Antigen recognized on a melanoma by autologous cytolytic T-lymphocytes. The protein is Melanoma-associated antigen 3 of Homo sapiens (Human).